Reading from the N-terminus, the 118-residue chain is Turripeptide NCR-01 (118 aa).

A signal peptide spans 1 to 16 (MLRLILAVALVAACLA). A disordered region spans residues 63–118 (QGFQGFLPQPHQKRDSYQHGGYQHQQSFDNFQGSGGMNNDNSDDSFALRNFNNDGY). Residues 85–102 (QHQQSFDNFQGSGGMNND) show a composition bias toward polar residues.

As to expression, expressed by the venom duct.

It is found in the secreted. The polypeptide is Turripeptide NCR-01 (Gemmula speciosa (Splendid gem-turris)).